The sequence spans 134 residues: Aspartate 1-decarboxylase (134 aa).

S25 (schiff-base intermediate with substrate; via pyruvic acid) is an active-site residue. A Pyruvic acid (Ser) modification is found at S25. Residue T57 participates in substrate binding. Y58 serves as the catalytic Proton donor. Residue G73–A75 coordinates substrate.

The protein belongs to the PanD family. Heterooctamer of four alpha and four beta subunits. Pyruvate serves as cofactor. Post-translationally, is synthesized initially as an inactive proenzyme, which is activated by self-cleavage at a specific serine bond to produce a beta-subunit with a hydroxyl group at its C-terminus and an alpha-subunit with a pyruvoyl group at its N-terminus.

Its subcellular location is the cytoplasm. It catalyses the reaction L-aspartate + H(+) = beta-alanine + CO2. The protein operates within cofactor biosynthesis; (R)-pantothenate biosynthesis; beta-alanine from L-aspartate: step 1/1. Its function is as follows. Catalyzes the pyruvoyl-dependent decarboxylation of aspartate to produce beta-alanine. The chain is Aspartate 1-decarboxylase from Geobacter sp. (strain M21).